A 327-amino-acid polypeptide reads, in one-letter code: Germination protease (327 aa).

Residues 1–7 (MNSVRTD) constitute a propeptide that is removed on maturation.

This sequence belongs to the peptidase A25 family. In terms of assembly, homotetramer. In terms of processing, autoproteolytically processed. The inactive tetrameric zymogen termed p46 autoprocesses to a smaller form termed p41, which is active only during spore germination.

The enzyme catalyses Endopeptidase action with P4 Glu or Asp, P1 preferably Glu &gt; Asp, P1' hydrophobic and P2' Ala.. Functionally, initiates the rapid degradation of small, acid-soluble proteins during spore germination. The polypeptide is Germination protease (Clostridium acetobutylicum (strain ATCC 824 / DSM 792 / JCM 1419 / IAM 19013 / LMG 5710 / NBRC 13948 / NRRL B-527 / VKM B-1787 / 2291 / W)).